The following is a 316-amino-acid chain: Acetyl-coenzyme A carboxylase carboxyl transferase subunit beta (316 aa).

Residues 39-308 (LWHKCSKCGV…TPPMVLWETM (270 aa)) form the CoA carboxyltransferase N-terminal domain. Positions 43, 46, 62, and 65 each coordinate Zn(2+). A C4-type zinc finger spans residues 43 to 65 (CSKCGVLTYTKDLRANQMVCVEC).

It belongs to the AccD/PCCB family. In terms of assembly, acetyl-CoA carboxylase is a heterohexamer composed of biotin carboxyl carrier protein (AccB), biotin carboxylase (AccC) and two subunits each of ACCase subunit alpha (AccA) and ACCase subunit beta (AccD). Zn(2+) is required as a cofactor.

The protein resides in the cytoplasm. The enzyme catalyses N(6)-carboxybiotinyl-L-lysyl-[protein] + acetyl-CoA = N(6)-biotinyl-L-lysyl-[protein] + malonyl-CoA. It functions in the pathway lipid metabolism; malonyl-CoA biosynthesis; malonyl-CoA from acetyl-CoA: step 1/1. In terms of biological role, component of the acetyl coenzyme A carboxylase (ACC) complex. Biotin carboxylase (BC) catalyzes the carboxylation of biotin on its carrier protein (BCCP) and then the CO(2) group is transferred by the transcarboxylase to acetyl-CoA to form malonyl-CoA. The sequence is that of Acetyl-coenzyme A carboxylase carboxyl transferase subunit beta from Nostoc sp. (strain PCC 7120 / SAG 25.82 / UTEX 2576).